Reading from the N-terminus, the 499-residue chain is Eukaryotic peptide chain release factor GTP-binding subunit ERF3A (499 aa).

Residues methionine 1–alanine 69 are disordered. The span at arginine 41 to methionine 50 shows a compositional bias: basic and acidic residues. The tr-type G domain maps to lysine 72 to valine 298. The G1 stretch occupies residues glycine 81–serine 88. Aspartate 84 to threonine 89 contributes to the GTP binding site. Residues glycine 137–glutamate 141 form a G2 region. A G3 region spans residues aspartate 158–glycine 161. GTP contacts are provided by residues asparagine 220 to aspartate 223 and serine 262 to leucine 264. Residues asparagine 220–aspartate 223 form a G4 region. Residues serine 262–leucine 264 form a G5 region.

This sequence belongs to the TRAFAC class translation factor GTPase superfamily. Classic translation factor GTPase family. ERF3 subfamily. Component of the eRF1-eRF3-GTP ternary complex, composed of ETF1/ERF1 and ERF3 (GSPT1/ERF3A or GSPT2/ERF3B) and GTP. Component of the transient SURF (SMG1-UPF1-eRF1-eRF3) complex. The ETF1-GSPT1 complex interacts with JMJD4. Interacts with PABPC1. Interacts with SHFL.

It catalyses the reaction GTP + H2O = GDP + phosphate + H(+). In terms of biological role, GTPase component of the eRF1-eRF3-GTP ternary complex, a ternary complex that mediates translation termination in response to the termination codons UAA, UAG and UGA. GSPT1/ERF3A mediates ETF1/ERF1 delivery to stop codons: The eRF1-eRF3-GTP complex binds to a stop codon in the ribosomal A-site. GTP hydrolysis by GSPT1/ERF3A induces a conformational change that leads to its dissociation, permitting ETF1/ERF1 to accommodate fully in the A-site. Component of the transient SURF complex which recruits UPF1 to stalled ribosomes in the context of nonsense-mediated decay (NMD) of mRNAs containing premature stop codons. Required for SHFL-mediated translation termination which inhibits programmed ribosomal frameshifting (-1PRF) of mRNA from viruses and cellular genes. The protein is Eukaryotic peptide chain release factor GTP-binding subunit ERF3A (GSPT1) of Homo sapiens (Human).